A 1013-amino-acid chain; its full sequence is RNA-binding protein 44 (1013 aa).

2 disordered regions span residues 1–25 (MQAT…FQND) and 56–94 (LATE…IFSQ). Residues 56–76 (LATEERASDKENSIVDQRDLS) show a composition bias toward basic and acidic residues. The span at 78–94 (LSFSENQDSNRGNIFSQ) shows a compositional bias: polar residues. Phosphoserine occurs at positions 365, 368, 510, 681, and 688. The region spanning 792–865 (FLIHVGGLCP…KSVTVRLVKI (74 aa)) is the RRM domain. The tract at residues 905–925 (RAKSRQLESEQDSEFPPLDQG) is disordered.

In terms of assembly, homodimer. Interacts with TEX14. As to expression, highly expressed in testis. Also expressed in other tissues at lower level.

The protein resides in the cytoplasm. Its function is as follows. Component of intercellular bridges during meiosis. Intercellular bridges are evolutionarily conserved structures that connect differentiating germ cells. Not required for fertility. The sequence is that of RNA-binding protein 44 (Rbm44) from Mus musculus (Mouse).